The chain runs to 128 residues: Early 3 14.7 kDa protein (128 aa).

It belongs to the adenoviridae E3_15 family. As to quaternary structure, may bind to host IKBKG, OPTN and RRAGA.

The protein resides in the host cytoplasm. It localises to the host nucleus. Its function is as follows. May prevent Nf-kappaB activation by immune signals like Tumor necrosis factor, presumably by inhibiting NFKB1 dimer DNA-binding. May act directly at the TNF receptor to inhibit signaling. This is Early 3 14.7 kDa protein from Human adenovirus C serotype 2 (HAdV-2).